We begin with the raw amino-acid sequence, 290 residues long: Nucleotide-binding protein XF_1405 (290 aa).

Position 13–20 (glycine 13–serine 20) interacts with ATP. GTP is bound at residue aspartate 65–serine 68.

It belongs to the RapZ-like family.

Displays ATPase and GTPase activities. This is Nucleotide-binding protein XF_1405 from Xylella fastidiosa (strain 9a5c).